Here is a 436-residue protein sequence, read N- to C-terminus: Trigger factor (436 aa).

The PPIase FKBP-type domain occupies D163 to P248.

It belongs to the FKBP-type PPIase family. Tig subfamily.

The protein localises to the cytoplasm. It carries out the reaction [protein]-peptidylproline (omega=180) = [protein]-peptidylproline (omega=0). Involved in protein export. Acts as a chaperone by maintaining the newly synthesized protein in an open conformation. Functions as a peptidyl-prolyl cis-trans isomerase. The sequence is that of Trigger factor from Bordetella avium (strain 197N).